Here is a 776-residue protein sequence, read N- to C-terminus: Transcription activator of gluconeogenesis HCAG_03671 (776 aa).

A disordered region spans residues 1–70 (MTASTQNGSP…NAKDPLRPRR (70 aa)). Polar residues-rich tracts occupy residues 21–41 (NQES…QSPA) and 50–60 (ENGQKHTSTAA). Positions 77–105 (CFACQRAHLTCGDERPCQRCIKRGLQDAC) form a DNA-binding region, zn(2)-C6 fungal-type. Disordered regions lie at residues 140–159 (RTNA…KDSR), 179–248 (TQAK…PFGA), 286–351 (GAGD…NIYN), 556–593 (NLNV…GGGG), and 651–726 (REAQ…SPKQ). Over residues 142 to 155 (NASQQQNGPNSNSN) the composition is skewed to low complexity. Polar residues predominate over residues 195-217 (MQDTSINPSAFQAPSPTSTPNFD). Positions 218-229 (LSSNPPNRNLSS) are enriched in low complexity. 4 stretches are compositionally biased toward polar residues: residues 230–244 (AMTQ…QTQD), 292–322 (PSDS…NTQP), 334–351 (WNPS…NIYN), and 557–576 (LNVN…TPRN). The span at 657-669 (GPDGKGGGGGGGD) shows a compositional bias: gly residues. The segment covering 670–714 (VATTAATTSTSTSNGANSSGHANANRNNTNPNNSSPPSSSSAAAA) has biased composition (low complexity).

The protein belongs to the ERT1/acuK family.

The protein resides in the nucleus. In terms of biological role, transcription factor which regulates nonfermentable carbon utilization. Activator of gluconeogenetic genes. The protein is Transcription activator of gluconeogenesis HCAG_03671 of Ajellomyces capsulatus (strain NAm1 / WU24) (Darling's disease fungus).